A 565-amino-acid chain; its full sequence is Proline--tRNA ligase (565 aa).

The protein belongs to the class-II aminoacyl-tRNA synthetase family. ProS type 1 subfamily. Homodimer.

It localises to the cytoplasm. It catalyses the reaction tRNA(Pro) + L-proline + ATP = L-prolyl-tRNA(Pro) + AMP + diphosphate. In terms of biological role, catalyzes the attachment of proline to tRNA(Pro) in a two-step reaction: proline is first activated by ATP to form Pro-AMP and then transferred to the acceptor end of tRNA(Pro). As ProRS can inadvertently accommodate and process non-cognate amino acids such as alanine and cysteine, to avoid such errors it has two additional distinct editing activities against alanine. One activity is designated as 'pretransfer' editing and involves the tRNA(Pro)-independent hydrolysis of activated Ala-AMP. The other activity is designated 'posttransfer' editing and involves deacylation of mischarged Ala-tRNA(Pro). The misacylated Cys-tRNA(Pro) is not edited by ProRS. The polypeptide is Proline--tRNA ligase (Lactobacillus johnsonii (strain CNCM I-12250 / La1 / NCC 533)).